The following is a 245-amino-acid chain: 1-(5-phosphoribosyl)-5-[(5-phosphoribosylamino)methylideneamino] imidazole-4-carboxamide isomerase (245 aa).

The active-site Proton acceptor is Asp8. Catalysis depends on Asp131, which acts as the Proton donor.

Belongs to the HisA/HisF family.

The protein localises to the cytoplasm. The enzyme catalyses 1-(5-phospho-beta-D-ribosyl)-5-[(5-phospho-beta-D-ribosylamino)methylideneamino]imidazole-4-carboxamide = 5-[(5-phospho-1-deoxy-D-ribulos-1-ylimino)methylamino]-1-(5-phospho-beta-D-ribosyl)imidazole-4-carboxamide. The protein operates within amino-acid biosynthesis; L-histidine biosynthesis; L-histidine from 5-phospho-alpha-D-ribose 1-diphosphate: step 4/9. This is 1-(5-phosphoribosyl)-5-[(5-phosphoribosylamino)methylideneamino] imidazole-4-carboxamide isomerase from Neisseria gonorrhoeae (strain ATCC 700825 / FA 1090).